Reading from the N-terminus, the 804-residue chain is MSFQHREIEKKWQDYWLTHKTFATSDSEDKPKFYALDMFPYPSGAGLHVGHPEGYTATDILSRMKRMQGYDVLHPMGWDAFGLPAEQYALDTGNDPAVFTEENINNFRRQIQSLGFSYDWDREINTTDPNYYKWTQWIFLKLYEKGLAYIDEVPVNWCPALGTVLANEEVIDGKSERGGHPVERRPMKQWMLKITAYADRLLEDLEDIDWPESIKDMQRNWIGRSEGAHVHFEIEGHDEQFTVFTTRPDTLFGATYAVLAPEHALVEKITTATQKEAVEAYIKEIQSKSDLERTDLAKTKTGIFTGAYAVNPLNGEKMPIWIADYVLATYGTGAIMAVPAHDERDYEFAKTFDLPIKAVVEGGDIEEEAYTGDGKHINSDFLDGLGKEEAIEKVIAWLEEHQKGEKKVTYRLRDWLFSRQRYWGEPIPIIHWEDGTSSAVSEEDLPLILPKTTEIKPSGTGESPLANIKDWVEVVDPVTGKKGRRETNTMPQWAGSCWYFLRYIDPHNSEELASPEKLKKWLPVDVYIGGAEHAVLHLLYARFWHKFLYDIGVVPTKEPFMKLFNQGMILGENNEKMSKSKGNVVNPDDIVESHGADTLRLYEMFMGPLDASIAWSETGLDGARRFLDRVWRLFTNEDGTISDKVTEQTGGALERSYHETVMKVTDHYEGLRFNTGISQLMVFINDAYKADTLPKEYAEGFVKLLSPIAPHLAEELWNKLGHEGSISYEAWPQYDESKLVDDEVEIVVQLNGKVKAKLTVPADATKEQLEDLAKSDARVKEQLEGKTIRKVIAVPGKLVNIVAN.

Positions 40-51 match the 'HIGH' region motif; sequence PYPSGAGLHVGH. Residues 576-580 carry the 'KMSKS' region motif; the sequence is KMSKS. Lys-579 is a binding site for ATP.

Belongs to the class-I aminoacyl-tRNA synthetase family.

Its subcellular location is the cytoplasm. The catalysed reaction is tRNA(Leu) + L-leucine + ATP = L-leucyl-tRNA(Leu) + AMP + diphosphate. The protein is Leucine--tRNA ligase of Bacillus pumilus (strain SAFR-032).